Here is a 294-residue protein sequence, read N- to C-terminus: Cytidine deaminase (294 aa).

2 consecutive CMP/dCMP-type deaminase domains span residues 48 to 168 and 186 to 294; these read DEDA…FGPK and LTGD…VLLA. 89–91 lines the substrate pocket; that stretch reads NME. Residue His102 participates in Zn(2+) binding. The active-site Proton donor is Glu104. Zn(2+) contacts are provided by Cys129 and Cys132.

The protein belongs to the cytidine and deoxycytidylate deaminase family. As to quaternary structure, homodimer. Zn(2+) serves as cofactor.

It carries out the reaction cytidine + H2O + H(+) = uridine + NH4(+). The enzyme catalyses 2'-deoxycytidine + H2O + H(+) = 2'-deoxyuridine + NH4(+). This enzyme scavenges exogenous and endogenous cytidine and 2'-deoxycytidine for UMP synthesis. The sequence is that of Cytidine deaminase from Shigella dysenteriae serotype 1 (strain Sd197).